The primary structure comprises 94 residues: Large ribosomal subunit protein uL23 (94 aa).

The protein belongs to the universal ribosomal protein uL23 family. In terms of assembly, part of the 50S ribosomal subunit. Contacts protein L29, and trigger factor when it is bound to the ribosome.

In terms of biological role, one of the early assembly proteins it binds 23S rRNA. One of the proteins that surrounds the polypeptide exit tunnel on the outside of the ribosome. Forms the main docking site for trigger factor binding to the ribosome. The protein is Large ribosomal subunit protein uL23 of Lysinibacillus sphaericus (strain C3-41).